The primary structure comprises 154 residues: Resuscitation-promoting factor RpfD (154 aa).

Residues 21 to 41 form a helical membrane-spanning segment; sequence IVCTVFIETAVVATMFVALLG.

Belongs to the transglycosylase family. Rpf subfamily.

It localises to the cell membrane. Functionally, factor that stimulates resuscitation of dormant cells. Has peptidoglycan (PG) hydrolytic activity. PG fragments could either directly activate the resuscitation pathway of dormant bacteria or serve as a substrate for endogenous Rpf, resulting in low molecular weight products with resuscitation activity. This chain is Resuscitation-promoting factor RpfD (rpfD), found in Mycobacterium tuberculosis (strain CDC 1551 / Oshkosh).